The sequence spans 211 residues: Glutathione S-transferase class-mu 28 kDa isozyme (211 aa).

The 83-residue stretch at 4 to 86 (DHIKVIYFNG…YMAKKHHMMG (83 aa)) folds into the GST N-terminal domain. Positions 10, 16, 41, 45, 53, 70, 71, and 104 each coordinate glutathione. Residues 88–211 (TDEEYYNVEK…YLSDRAATPF (124 aa)) enclose the GST C-terminal domain.

The protein belongs to the GST superfamily. Mu family. Homodimer.

It carries out the reaction RX + glutathione = an S-substituted glutathione + a halide anion + H(+). Functionally, conjugation of reduced glutathione to a wide number of exogenous and endogenous hydrophobic electrophiles. Its function is as follows. GST isoenzymes appear to play a central role in the parasite detoxification system. Other functions are also suspected including a role in increasing the solubility of haematin in the parasite gut. The sequence is that of Glutathione S-transferase class-mu 28 kDa isozyme from Schistosoma bovis (Blood fluke).